Here is a 295-residue protein sequence, read N- to C-terminus: Bifunctional protein FolD (295 aa).

Residues 166–168, S191, and I232 each bind NADP(+); that span reads GRS.

Belongs to the tetrahydrofolate dehydrogenase/cyclohydrolase family. Homodimer.

It catalyses the reaction (6R)-5,10-methylene-5,6,7,8-tetrahydrofolate + NADP(+) = (6R)-5,10-methenyltetrahydrofolate + NADPH. It carries out the reaction (6R)-5,10-methenyltetrahydrofolate + H2O = (6R)-10-formyltetrahydrofolate + H(+). It participates in one-carbon metabolism; tetrahydrofolate interconversion. Catalyzes the oxidation of 5,10-methylenetetrahydrofolate to 5,10-methenyltetrahydrofolate and then the hydrolysis of 5,10-methenyltetrahydrofolate to 10-formyltetrahydrofolate. In Rhodopseudomonas palustris (strain BisB5), this protein is Bifunctional protein FolD.